The sequence spans 67 residues: Putative selenoprotein YdfZ (67 aa).

Position 52 is an S-selanylcysteine (Cys-52).

The protein is Putative selenoprotein YdfZ (ydfZ) of Escherichia coli O6:H1 (strain CFT073 / ATCC 700928 / UPEC).